We begin with the raw amino-acid sequence, 311 residues long: Mitochondrial ribosome-associated GTPase 1 (311 aa).

One can recognise a CP-type G domain in the interval 27 to 200 (AKGLKQMKTK…LFDTPGVLSP (174 aa)). GTP-binding positions include 74–77 (NKMD), 144–149 (NVGKSS), and Gly-196.

Belongs to the TRAFAC class YlqF/YawG GTPase family. MTG1 subfamily.

Its subcellular location is the mitochondrion inner membrane. In terms of biological role, plays a role in the regulation of the mitochondrial ribosome assembly and of translational activity. Displays mitochondrial GTPase activity. The protein is Mitochondrial ribosome-associated GTPase 1 of Xenopus tropicalis (Western clawed frog).